The chain runs to 1839 residues: DNA-directed RNA polymerase II subunit RPB1 (1839 aa).

Positions 66, 69, 76, 79, 106, 109, and 147 each coordinate Zn(2+). The interval 152–174 (DIDDVQSHSTDEPVKKSRGGCGA) is disordered. Residues 156–166 (VQSHSTDEPVK) are compositionally biased toward basic and acidic residues. Position 172 (cysteine 172) interacts with Zn(2+). Residues 326-397 (TQKSGRPIKS…PETVTPYNIE (72 aa)) mediate DNA binding. Mg(2+)-binding residues include aspartate 495, aspartate 497, and aspartate 499. The segment at 785–795 (GQQNVEGKRIP) is alpha-amanitin binding. The interval 829–841 (PQEFFFHAMGGRE) is bridging helix. A compositionally biased stretch (low complexity) spans 1538 to 1726 (PSSSPGYSPS…PSYGPTSPSY (189 aa)). Residues 1538–1839 (PSSSPGYSPS…DASKDDKGNP (302 aa)) form a disordered region. 27 repeat units span residues 1544–1550 (YSPSSPG), 1551–1557 (YSPTSPG), 1558–1564 (YSPTSPG), 1565–1571 (YSPTSPG), 1572–1578 (YSPTSPT), 1579–1585 (YSPSSPG), 1586–1592 (YSPTSPA), 1593–1599 (YSPTSPS), 1600–1606 (YSPTSPS), 1607–1613 (YSPTSPS), 1614–1620 (YSPTSPS), 1621–1627 (YSPTSPS), 1628–1634 (YSPTSPS), 1635–1641 (YSPTSPA), 1642–1648 (YSPTSPA), 1649–1655 (YSPTSPA), 1656–1662 (YSPTSPS), 1663–1669 (YSPTSPS), 1670–1676 (YSPTSPS), 1677–1683 (YSPTSPS), 1684–1690 (YSPTSPS), 1691–1697 (YSPTSPA), 1698–1704 (YSPTSPG), 1705–1711 (YSPTSPS), 1712–1718 (YSPTSPS), 1719–1725 (YGPTSPS), and 1726–1732 (YNPQSAK). Residues 1544 to 1813 (YSPSSPGYSP…LPGYSPSSTG (270 aa)) form a C-terminal domain (CTD); 37 X 7 AA tandem approximate repeats of Y-[GNS]-P-[QST]-[LNS]-[APT]-[AGKNRSTY] region. Polar residues predominate over residues 1727 to 1745 (NPQSAKYSPSIAYSPSNAR). The 28; approximate repeat unit spans residues 1733–1738 (YSPSIA). Tandem repeats lie at residues 1739–1745 (YSPSNAR), 1752–1758 (YSPTSPN), 1759–1765 (YSPTSPS), 1766–1772 (YSPTSPS), 1773–1779 (YSPSSPT), and 1780–1786 (YSPSSPY). Over residues 1747–1798 (SPASPYSPTSPNYSPTSPSYSPTSPSYSPSSPTYSPSSPYSSGASPDYSPSA) the composition is skewed to low complexity. A 35; approximate repeat occupies 1794-1799 (YSPSAG). 2 repeat units span residues 1800–1806 (YSPTLPG) and 1807–1813 (YSPSSTG). Residues 1818–1839 (HEGDKKDKTGKKDASKDDKGNP) show a composition bias toward basic and acidic residues.

It belongs to the RNA polymerase beta' chain family. In terms of assembly, component of the RNA polymerase II (Pol II) complex consisting of at least 12 subunits. Interacts with RDM1. Interacts (via CTD) with PRP40A, PRP40B, PRP40C and CYP59. Interacts with MEE12/CCG1 and MEE14/CBP1. Binds (via CTD) to ATX1, especially when phosphorylated on 'Ser-5' of the heptapeptide repeat. The tandem 7 residues repeats in the C-terminal domain (CTD) can be highly phosphorylated. The phosphorylation activates Pol II. Phosphorylation occurs mainly at residues 'Ser-2' and 'Ser-5' of the heptapeptide repeat. The phosphorylation state is believed to result from the balanced action of site-specific CTD kinases and phosphatase, and a 'CTD code' that specifies the position of Pol II within the transcription cycle has been proposed. ATX1 seems to regulate phosphorylation statment. 'Ser-2' and 'Ser-5' phosphorylation are repressed by flavopiridol (Flap) and seliciclib (Selic), inhibitors of CDK7 and CDK9.

The protein resides in the nucleus. It carries out the reaction RNA(n) + a ribonucleoside 5'-triphosphate = RNA(n+1) + diphosphate. Functionally, DNA-dependent RNA polymerase catalyzes the transcription of DNA into RNA using the four ribonucleoside triphosphates as substrates. Largest and catalytic component of RNA polymerase II which synthesizes mRNA precursors and many functional non-coding RNAs. Forms the polymerase active center together with the second largest subunit. Pol II is the central component of the basal RNA polymerase II transcription machinery. It is composed of mobile elements that move relative to each other. NRPB1 is part of the core element with the central large cleft, the clamp element that moves to open and close the cleft and the jaws that are thought to grab the incoming DNA template. At the start of transcription, a single-stranded DNA template strand of the promoter is positioned within the central active site cleft of Pol II. A bridging helix emanates from NRPB1 and crosses the cleft near the catalytic site and is thought to promote translocation of Pol II by acting as a ratchet that moves the RNA-DNA hybrid through the active site by switching from straight to bent conformations at each step of nucleotide addition. During transcription elongation, Pol II moves on the template as the transcript elongates. Elongation is influenced by the phosphorylation status of the C-terminal domain (CTD) of Pol II largest subunit (NRPB1), which serves as a platform for assembly of factors that regulate transcription initiation, elongation, termination and mRNA processing. In Arabidopsis thaliana (Mouse-ear cress), this protein is DNA-directed RNA polymerase II subunit RPB1.